The sequence spans 337 residues: MSDLKPFVAKVAAREALSRDDARAAFEIIMSGAATPSQIGGFLMALRVRGETVDEIVGAVGAMRARMLHVKAPDGSIDIVGTGGDGAGTYNISTLAALIVAGAGVPVAKHGNRALSSKSGTADALSCLGVNLEIGPEAISRCIGEAGLGFMFAQQHHSAMRHVGPTRVELGTRTIFNLLGPLANPAGVRQQLVGVYAPQWVDPLAEVLRDLGSESVWVVHGEGLDEITTTGVTKVAALKDGTITNFELTPADFGLERVTLDALKGGDGAHNAAALQAVLDGAENAYRDISLANAAASLMIAGRAKDLMEGMDLARKSLSSGAAKVALQRLITVSNAA.

Residues G81, 84–85 (GD), T89, 91–94 (NIST), 109–117 (KHGNRALSS), and T121 each bind 5-phospho-alpha-D-ribose 1-diphosphate. G81 is an anthranilate binding site. S93 contacts Mg(2+). N112 serves as a coordination point for anthranilate. Residue R167 participates in anthranilate binding. The Mg(2+) site is built by D225 and E226.

Belongs to the anthranilate phosphoribosyltransferase family. Homodimer. Mg(2+) is required as a cofactor.

The enzyme catalyses N-(5-phospho-beta-D-ribosyl)anthranilate + diphosphate = 5-phospho-alpha-D-ribose 1-diphosphate + anthranilate. The protein operates within amino-acid biosynthesis; L-tryptophan biosynthesis; L-tryptophan from chorismate: step 2/5. Its function is as follows. Catalyzes the transfer of the phosphoribosyl group of 5-phosphorylribose-1-pyrophosphate (PRPP) to anthranilate to yield N-(5'-phosphoribosyl)-anthranilate (PRA). In Sinorhizobium medicae (strain WSM419) (Ensifer medicae), this protein is Anthranilate phosphoribosyltransferase.